A 219-amino-acid polypeptide reads, in one-letter code: Probable N-acetyltransferase camello (219 aa).

2 helical membrane passes run 44–64 and 66–86; these read FITF…VLAL and SLVA…HGLA. Positions 62–211 constitute an N-acetyltransferase domain; sequence LALTSLVALL…VHQYTSFTVA (150 aa).

This sequence belongs to the camello family.

It localises to the golgi apparatus membrane. Its function is as follows. Plays a role in regulation of gastrulation, possibly by controlled reduction of cell adhesion in the periblastopore region which is necessary for optimal cell motility. This Xenopus tropicalis (Western clawed frog) protein is Probable N-acetyltransferase camello.